A 260-amino-acid polypeptide reads, in one-letter code: Hemin import ATP-binding protein HmuV (260 aa).

In terms of domain architecture, ABC transporter spans 6–242 (LHADNLHYRA…VQLRACYQAD (237 aa)). 38-45 (GPNGAGKS) is an ATP binding site.

It belongs to the ABC transporter superfamily. Heme (hemin) importer (TC 3.A.1.14.5) family. In terms of assembly, the complex is composed of two ATP-binding proteins (HmuV), two transmembrane proteins (HmuU) and a solute-binding protein (HmuT).

Its subcellular location is the cell inner membrane. In terms of biological role, part of the ABC transporter complex HmuTUV involved in hemin import. Responsible for energy coupling to the transport system. This is Hemin import ATP-binding protein HmuV from Sodalis glossinidius (strain morsitans).